We begin with the raw amino-acid sequence, 907 residues long: Protein translocase subunit SecA (907 aa).

ATP-binding positions include Q87, 105–109, and D512; that span reads GEGKT. Residues 870–897 form a disordered region; it reads AALAATQPQVREGEKVGRNDPCPCGSGK. Zn(2+) contacts are provided by C891, C893, C902, and H903.

It belongs to the SecA family. As to quaternary structure, monomer and homodimer. Part of the essential Sec protein translocation apparatus which comprises SecA, SecYEG and auxiliary proteins SecDF-YajC and YidC. Zn(2+) is required as a cofactor.

It localises to the cell inner membrane. Its subcellular location is the cytoplasm. It catalyses the reaction ATP + H2O + cellular proteinSide 1 = ADP + phosphate + cellular proteinSide 2.. In terms of biological role, part of the Sec protein translocase complex. Interacts with the SecYEG preprotein conducting channel. Has a central role in coupling the hydrolysis of ATP to the transfer of proteins into and across the cell membrane, serving both as a receptor for the preprotein-SecB complex and as an ATP-driven molecular motor driving the stepwise translocation of polypeptide chains across the membrane. This Shewanella piezotolerans (strain WP3 / JCM 13877) protein is Protein translocase subunit SecA.